Consider the following 349-residue polypeptide: Magnesium-protoporphyrin IX monomethyl ester [oxidative] cyclase (349 aa).

Low complexity predominate over residues 1-10 (MTATTATAPA). The disordered stretch occupies residues 1-23 (MTATTATAPAMRGGGRNELPPHL).

Belongs to the AcsF family. Fe cation is required as a cofactor.

The enzyme catalyses Mg-protoporphyrin IX 13-monomethyl ester + 3 NADPH + 3 O2 + 2 H(+) = 3,8-divinyl protochlorophyllide a + 3 NADP(+) + 5 H2O. Its pathway is porphyrin-containing compound metabolism; chlorophyll biosynthesis (light-independent). Its function is as follows. Catalyzes the formation of the isocyclic ring in chlorophyll biosynthesis. Mediates the cyclase reaction, which results in the formation of divinylprotochlorophyllide (Pchlide) characteristic of all chlorophylls from magnesium-protoporphyrin IX 13-monomethyl ester (MgPMME). The chain is Magnesium-protoporphyrin IX monomethyl ester [oxidative] cyclase from Prochlorococcus marinus (strain MIT 9303).